The chain runs to 428 residues: 3-phosphoshikimate 1-carboxyvinyltransferase (428 aa).

Residues lysine 23, serine 24, and arginine 28 each coordinate 3-phosphoshikimate. Lysine 23 serves as a coordination point for phosphoenolpyruvate. Residues glycine 97 and arginine 125 each contribute to the phosphoenolpyruvate site. Residues serine 170, serine 171, glutamine 172, serine 198, aspartate 314, asparagine 337, and lysine 341 each contribute to the 3-phosphoshikimate site. Glutamine 172 serves as a coordination point for phosphoenolpyruvate. Aspartate 314 acts as the Proton acceptor in catalysis. 3 residues coordinate phosphoenolpyruvate: arginine 345, arginine 387, and lysine 412.

Belongs to the EPSP synthase family. In terms of assembly, monomer.

The protein resides in the cytoplasm. It catalyses the reaction 3-phosphoshikimate + phosphoenolpyruvate = 5-O-(1-carboxyvinyl)-3-phosphoshikimate + phosphate. The protein operates within metabolic intermediate biosynthesis; chorismate biosynthesis; chorismate from D-erythrose 4-phosphate and phosphoenolpyruvate: step 6/7. Its function is as follows. Catalyzes the transfer of the enolpyruvyl moiety of phosphoenolpyruvate (PEP) to the 5-hydroxyl of shikimate-3-phosphate (S3P) to produce enolpyruvyl shikimate-3-phosphate and inorganic phosphate. The polypeptide is 3-phosphoshikimate 1-carboxyvinyltransferase (Erwinia tasmaniensis (strain DSM 17950 / CFBP 7177 / CIP 109463 / NCPPB 4357 / Et1/99)).